We begin with the raw amino-acid sequence, 101 residues long: Large ribosomal subunit protein eL21 (101 aa).

A compositionally biased stretch (basic residues) spans 1–18 (MVKHSRGYRTRSRSLLRK). Residues 1–23 (MVKHSRGYRTRSRSLLRKSPRER) are disordered.

The protein belongs to the eukaryotic ribosomal protein eL21 family.

The chain is Large ribosomal subunit protein eL21 from Saccharolobus islandicus (strain Y.N.15.51 / Yellowstone #2) (Sulfolobus islandicus).